Here is a 103-residue protein sequence, read N- to C-terminus: Cytochrome c55X (103 aa).

The signal sequence occupies residues 1 to 17 (MARLALLLVLLAGTAVA). Heme c contacts are provided by cysteine 36, cysteine 39, and histidine 40.

Post-translationally, binds 1 heme c group covalently per subunit.

It is found in the periplasm. Its function is as follows. Monoheme c-type cytochrome. The chain is Cytochrome c55X (nirC) from Paracoccus denitrificans (strain Pd 1222).